A 254-amino-acid polypeptide reads, in one-letter code: Phosphomannomutase (254 aa).

Aspartate 19 acts as the Nucleophile in catalysis. Mg(2+)-binding residues include aspartate 19 and aspartate 21. Aspartate 21 acts as the Proton donor/acceptor in catalysis. The alpha-D-mannose 1-phosphate site is built by arginine 28, arginine 130, arginine 141, arginine 148, serine 186, and aspartate 188. Mg(2+) contacts are provided by aspartate 216, phenylalanine 228, aspartate 230, and threonine 233. Serine 240 carries the post-translational modification Phosphoserine.

It belongs to the eukaryotic PMM family. In terms of assembly, homodimer.

It localises to the cytoplasm. It carries out the reaction alpha-D-mannose 1-phosphate = D-mannose 6-phosphate. It participates in nucleotide-sugar biosynthesis; GDP-alpha-D-mannose biosynthesis; alpha-D-mannose 1-phosphate from D-fructose 6-phosphate: step 2/2. Its function is as follows. Involved in the synthesis of the GDP-mannose and dolichol-phosphate-mannose required for a number of critical mannosyl transfer reactions such as folding and glycosylation of secretory proteins in the ER lumen. The protein is Phosphomannomutase of Saccharomyces cerevisiae (strain ATCC 204508 / S288c) (Baker's yeast).